The sequence spans 521 residues: Cytochrome P450 1A1 (521 aa).

F229 is a substrate binding site. Residue C463 participates in heme binding.

This sequence belongs to the cytochrome P450 family. Heme serves as cofactor.

Its subcellular location is the endoplasmic reticulum membrane. It is found in the microsome membrane. The catalysed reaction is an organic molecule + reduced [NADPH--hemoprotein reductase] + O2 = an alcohol + oxidized [NADPH--hemoprotein reductase] + H2O + H(+). Functionally, cytochromes P450 are a group of heme-thiolate monooxygenases. They oxidize a variety of structurally unrelated compounds, including steroids, fatty acids, and xenobiotics. This chain is Cytochrome P450 1A1 (cyp1a1), found in Pleuronectes platessa (European plaice).